The primary structure comprises 145 residues: MPGKILLLNGPNLNMLGKREPDIYGHDTLEDVVALATAEAAKHGLEVEALQSNHEGELIDALHNARGTHIGCVINPGGLTHTSVALLDAVKASELPTVEVHISNPHAREEFRHHSYISLAAVSVIAGAGIQGYRFAVDILANLKK.

The active-site Proton acceptor is the Tyr24. Asn75, His81, and Asp88 together coordinate substrate. The Proton donor role is filled by His101. Substrate-binding positions include 102-103 (IS) and Arg112.

The protein belongs to the type-II 3-dehydroquinase family. In terms of assembly, homododecamer.

The catalysed reaction is 3-dehydroquinate = 3-dehydroshikimate + H2O. It participates in metabolic intermediate biosynthesis; chorismate biosynthesis; chorismate from D-erythrose 4-phosphate and phosphoenolpyruvate: step 3/7. Its function is as follows. Catalyzes a trans-dehydration via an enolate intermediate. The polypeptide is 3-dehydroquinate dehydratase (aroQ) (Corynebacterium glutamicum (strain ATCC 13032 / DSM 20300 / JCM 1318 / BCRC 11384 / CCUG 27702 / LMG 3730 / NBRC 12168 / NCIMB 10025 / NRRL B-2784 / 534)).